We begin with the raw amino-acid sequence, 406 residues long: Cysteine desulfurase (406 aa).

K226 is subject to N6-(pyridoxal phosphate)lysine. Catalysis depends on C364, which acts as the Cysteine persulfide intermediate.

This sequence belongs to the class-V pyridoxal-phosphate-dependent aminotransferase family. Csd subfamily. Homodimer. Interacts with SufE and the SufBCD complex composed of SufB, SufC and SufD. The interaction with SufE is required to mediate the direct transfer of the sulfur atom from the S-sulfanylcysteine. Requires pyridoxal 5'-phosphate as cofactor.

Its subcellular location is the cytoplasm. It carries out the reaction (sulfur carrier)-H + L-cysteine = (sulfur carrier)-SH + L-alanine. The catalysed reaction is L-selenocysteine + AH2 = hydrogenselenide + L-alanine + A + H(+). It functions in the pathway cofactor biosynthesis; iron-sulfur cluster biosynthesis. In terms of biological role, cysteine desulfurases mobilize the sulfur from L-cysteine to yield L-alanine, an essential step in sulfur metabolism for biosynthesis of a variety of sulfur-containing biomolecules. Component of the suf operon, which is activated and required under specific conditions such as oxidative stress and iron limitation. Acts as a potent selenocysteine lyase in vitro, that mobilizes selenium from L-selenocysteine. Selenocysteine lyase activity is however unsure in vivo. The chain is Cysteine desulfurase from Yersinia pseudotuberculosis serotype O:1b (strain IP 31758).